Here is a 617-residue protein sequence, read N- to C-terminus: V-type proton ATPase catalytic subunit A (617 aa).

Aspartate 2 bears the N-acetylalanine mark. At threonine 136 the chain carries Phosphothreonine. 250–257 provides a ligand contact to ATP; the sequence is GAFGCGKT. Serine 384 is modified (phosphoserine; by AMPK).

Belongs to the ATPase alpha/beta chains family. V-ATPase is a heteromultimeric enzyme made up of two complexes: the ATP-hydrolytic V1 complex and the proton translocation V0 complex. The V1 complex consists of three catalytic AB heterodimers that form a heterohexamer, three peripheral stalks each consisting of EG heterodimers, one central rotor including subunits D and F, and the regulatory subunits C and H. The proton translocation complex V0 consists of the proton transport subunit a, a ring of proteolipid subunits c9c'', rotary subunit d, subunits e and f, and the accessory subunits ATP6AP1/Ac45 and ATP6AP2/PRR. Interacts with the V0 complex V-ATPase subunit a4 ATP6V0A4. Interacts with WFS1. Interacts with alpha-crystallin B chain/CRYAB and with MTOR, forming a ternary complex. As to quaternary structure, (Microbial infection) Interacts with Rabies virus protein M; this interaction promotes virion uncoating. Phosphorylation at Ser-384 by AMPK down-regulates its enzyme activity. As to expression, high expression in the skin.

The protein resides in the cytoplasm. It is found in the cytosol. It localises to the cytoplasmic vesicle. The protein localises to the secretory vesicle. Its subcellular location is the clathrin-coated vesicle membrane. The protein resides in the lysosome. The enzyme catalyses ATP + H2O + 4 H(+)(in) = ADP + phosphate + 5 H(+)(out). Its activity is regulated as follows. ATP hydrolysis occurs at the interface between the nucleotide-binding domains of subunits A and B. ATP hydrolysis triggers a conformational change in the subunits D and F, which induces a shift of subunit d. The c-ring is subsequently rotated and results in a continuous proton translocation across the membrane. Functionally, catalytic subunit of the V1 complex of vacuolar(H+)-ATPase (V-ATPase), a multisubunit enzyme composed of a peripheral complex (V1) that hydrolyzes ATP and a membrane integral complex (V0) that translocates protons. V-ATPase is responsible for acidifying and maintaining the pH of intracellular compartments and in some cell types, is targeted to the plasma membrane, where it is responsible for acidifying the extracellular environment. In aerobic conditions, involved in intracellular iron homeostasis, thus triggering the activity of Fe(2+) prolyl hydroxylase (PHD) enzymes, and leading to HIF1A hydroxylation and subsequent proteasomal degradation. May play a role in neurite development and synaptic connectivity. Its function is as follows. (Microbial infection) Plays an important role in virion uncoating during Rabies virus replication after membrane fusion. Specifically, participates in the dissociation of incoming viral matrix M proteins uncoating through direct interaction. The protein is V-type proton ATPase catalytic subunit A (ATP6V1A) of Homo sapiens (Human).